Reading from the N-terminus, the 428-residue chain is Adenylosuccinate synthetase (428 aa).

GTP contacts are provided by residues 12–18 and 40–42; these read GDEGKGK and GHT. D13 functions as the Proton acceptor in the catalytic mechanism. Positions 13 and 40 each coordinate Mg(2+). Residues 13 to 16, 38 to 41, T128, R142, Q223, T238, and R302 contribute to the IMP site; these read DEGK and NAGH. The Proton donor role is filled by H41. Position 298–304 (298–304) interacts with substrate; it reads TTTGRPR. GTP contacts are provided by residues R304, 330–332, and 412–414; these read SID and SVG.

It belongs to the adenylosuccinate synthetase family. In terms of assembly, homodimer. It depends on Mg(2+) as a cofactor.

The protein resides in the cytoplasm. The catalysed reaction is IMP + L-aspartate + GTP = N(6)-(1,2-dicarboxyethyl)-AMP + GDP + phosphate + 2 H(+). It participates in purine metabolism; AMP biosynthesis via de novo pathway; AMP from IMP: step 1/2. In terms of biological role, plays an important role in the de novo pathway of purine nucleotide biosynthesis. Catalyzes the first committed step in the biosynthesis of AMP from IMP. This Shouchella clausii (strain KSM-K16) (Alkalihalobacillus clausii) protein is Adenylosuccinate synthetase.